The sequence spans 189 residues: Ribosome maturation factor RimP (189 aa).

It belongs to the RimP family.

The protein resides in the cytoplasm. Its function is as follows. Required for maturation of 30S ribosomal subunits. This is Ribosome maturation factor RimP from Corynebacterium kroppenstedtii (strain DSM 44385 / JCM 11950 / CIP 105744 / CCUG 35717).